Reading from the N-terminus, the 204-residue chain is uncharacterized protein (204 aa).

This is an uncharacterized protein from Dictyostelium discoideum (Social amoeba).